A 276-amino-acid chain; its full sequence is Shikimate dehydrogenase (NADP(+)) (276 aa).

Shikimate-binding positions include 15–17 and Thr62; that span reads SLS. Lys66 (proton acceptor) is an active-site residue. Glu78 lines the NADP(+) pocket. Residues Asn87 and Asp102 each contribute to the shikimate site. NADP(+) is bound by residues 151-156 and Ile218; that span reads NRTVEK. Shikimate is bound at residue Tyr220. Gly241 contributes to the NADP(+) binding site.

The protein belongs to the shikimate dehydrogenase family. In terms of assembly, homodimer.

It carries out the reaction shikimate + NADP(+) = 3-dehydroshikimate + NADPH + H(+). The protein operates within metabolic intermediate biosynthesis; chorismate biosynthesis; chorismate from D-erythrose 4-phosphate and phosphoenolpyruvate: step 4/7. Involved in the biosynthesis of the chorismate, which leads to the biosynthesis of aromatic amino acids. Catalyzes the reversible NADPH linked reduction of 3-dehydroshikimate (DHSA) to yield shikimate (SA). In Geobacillus kaustophilus (strain HTA426), this protein is Shikimate dehydrogenase (NADP(+)).